The chain runs to 536 residues: Pentatricopeptide repeat-containing protein At2g06000 (536 aa).

PPR repeat units follow at residues 102-136 (SFWT…GVSP), 137-167 (NNRL…SFEV), 170-200 (CCMV…HLRF), 205-239 (DTKT…GCEP), 240-274 (DIVT…SVCS), 276-310 (DVVT…GIYP), 311-345 (TNVT…GCFP), 346-380 (DVVT…GMFP), 381-415 (NAFT…DIIP), 416-450 (QPFM…KCKP), 451-485 (DKIT…GCSP), and 486-523 (DKIT…NVVP).

It belongs to the PPR family. P subfamily.

This is Pentatricopeptide repeat-containing protein At2g06000 from Arabidopsis thaliana (Mouse-ear cress).